The chain runs to 261 residues: uncharacterized protein (261 aa).

Residues histidine 7, histidine 9, glutamate 96, histidine 132, histidine 156, and aspartate 211 each coordinate a divalent metal cation.

The protein belongs to the metallo-dependent hydrolases superfamily. TatD-type hydrolase family. The cofactor is a divalent metal cation.

This is an uncharacterized protein from Mycoplasma pneumoniae (strain ATCC 29342 / M129 / Subtype 1) (Mycoplasmoides pneumoniae).